Here is a 227-residue protein sequence, read N- to C-terminus: uncharacterized protein (227 aa).

This sequence belongs to the flavoredoxin family. Requires FMN as cofactor.

This is an uncharacterized protein from Deinococcus radiodurans (strain ATCC 13939 / DSM 20539 / JCM 16871 / CCUG 27074 / LMG 4051 / NBRC 15346 / NCIMB 9279 / VKM B-1422 / R1).